The sequence spans 469 residues: Glutamate--tRNA ligase (469 aa).

Residues 11-21 (PSPTGFIHLGN) carry the 'HIGH' region motif. The short motif at 243–247 (KMSKR) is the 'KMSKS' region element. Lys246 is an ATP binding site.

This sequence belongs to the class-I aminoacyl-tRNA synthetase family. Glutamate--tRNA ligase type 1 subfamily. As to quaternary structure, monomer.

The protein localises to the cytoplasm. It catalyses the reaction tRNA(Glu) + L-glutamate + ATP = L-glutamyl-tRNA(Glu) + AMP + diphosphate. Catalyzes the attachment of glutamate to tRNA(Glu) in a two-step reaction: glutamate is first activated by ATP to form Glu-AMP and then transferred to the acceptor end of tRNA(Glu). The chain is Glutamate--tRNA ligase from Burkholderia orbicola (strain AU 1054).